The primary structure comprises 791 residues: Phenylalanine--tRNA ligase beta subunit (791 aa).

Positions 39-148 (AADFSGVVVA…ADAPVGADIR (110 aa)) constitute a tRNA-binding domain. A B5 domain is found at 401-476 (PLRAPVRLRE…RVYGYDAIPR (76 aa)). Residues Asp-454, Asp-460, Glu-463, and Glu-464 each coordinate Mg(2+). The FDX-ACB domain occupies 697 to 790 (SRFPLVRRDL…LAADFGAKLR (94 aa)).

The protein belongs to the phenylalanyl-tRNA synthetase beta subunit family. Type 1 subfamily. In terms of assembly, tetramer of two alpha and two beta subunits. Mg(2+) is required as a cofactor.

It localises to the cytoplasm. It catalyses the reaction tRNA(Phe) + L-phenylalanine + ATP = L-phenylalanyl-tRNA(Phe) + AMP + diphosphate + H(+). The polypeptide is Phenylalanine--tRNA ligase beta subunit (Methylococcus capsulatus (strain ATCC 33009 / NCIMB 11132 / Bath)).